Here is a 288-residue protein sequence, read N- to C-terminus: MITTATRWPSPAKLNLFLYINGQHDNGYHELQTLFQFIDLCDHLTITPNDSGEITLSPPIPGVEKKDNLIWKAATQLQEHTLCPLGAHIELEKILPIGGGIGGGSSNAATTLVALNFLWDLNLTNKELADLGVTLGADVPIFVHGFSAFAEGIGEKLQPANPKELWYVLIKPEVSIATVDVFSHPELIRNTAKQPLNVLLSASYENDCEKIVRRVYPEVDYQLSWLLEYAPSRLTGTGACVFAEFINEKEAQHVFSLIPDNATGFITRGRNTSPLNQALEEYKSLCNI.

The active site involves Lys-13. Position 96 to 106 (96 to 106 (PIGGGIGGGSS)) interacts with ATP. Residue Asp-138 is part of the active site.

It belongs to the GHMP kinase family. IspE subfamily.

It catalyses the reaction 4-CDP-2-C-methyl-D-erythritol + ATP = 4-CDP-2-C-methyl-D-erythritol 2-phosphate + ADP + H(+). It participates in isoprenoid biosynthesis; isopentenyl diphosphate biosynthesis via DXP pathway; isopentenyl diphosphate from 1-deoxy-D-xylulose 5-phosphate: step 3/6. Its function is as follows. Catalyzes the phosphorylation of the position 2 hydroxy group of 4-diphosphocytidyl-2C-methyl-D-erythritol. The sequence is that of 4-diphosphocytidyl-2-C-methyl-D-erythritol kinase from Aliivibrio salmonicida (strain LFI1238) (Vibrio salmonicida (strain LFI1238)).